Reading from the N-terminus, the 540-residue chain is Probable H/ACA ribonucleoprotein complex subunit 4 (540 aa).

Residues 1–24 are disordered; sequence MTTDKKSKSKSSEKSTQEVEQVIK. D109 functions as the Nucleophile in the catalytic mechanism. The PUA domain maps to 280 to 355; it reads YKRIVVKDSA…VVATIKRVIM (76 aa). The tract at residues 414–540 is disordered; sequence SPVESMNVDT…DKKEKKKSKN (127 aa). Residues 448-494 adopt a coiled-coil conformation; it reads KKEKKDKKEKKKDSSDDESEEEKSSKKDKKEKKEKKEKKEKKSSKDD. A compositionally biased stretch (basic residues) spans 473 to 489; the sequence is KKDKKEKKEKKEKKEKK. Composition is skewed to basic and acidic residues over residues 490-503 and 513-528; these read SSKD…SKKE and SDKD…DKKD. Residues 529–540 show a composition bias toward basic residues; that stretch reads KKDKKEKKKSKN.

It belongs to the pseudouridine synthase TruB family. Component of the small nucleolar ribonucleoprotein particles containing H/ACA-type snoRNAs (H/ACA snoRNPs).

It localises to the nucleus. Its subcellular location is the nucleolus. The catalysed reaction is a uridine in RNA = a pseudouridine in RNA. Plays a central role in ribosomal RNA processing. Probable catalytic subunit of H/ACA small nucleolar ribonucleoprotein (H/ACA snoRNP) complex, which catalyzes pseudouridylation of rRNA. This involves the isomerization of uridine such that the ribose is subsequently attached to C5, instead of the normal N1. Pseudouridine ('psi') residues may serve to stabilize the conformation of rRNAs. In Dictyostelium discoideum (Social amoeba), this protein is Probable H/ACA ribonucleoprotein complex subunit 4 (nola4).